The following is a 333-amino-acid chain: Lipoyl synthase (333 aa).

[4Fe-4S] cluster is bound by residues C55, C60, C66, C81, C85, C88, and S292. Residues 67–281 form the Radical SAM core domain; sequence WEDREATFLI…SAEAERLGFA (215 aa).

The protein belongs to the radical SAM superfamily. Lipoyl synthase family. It depends on [4Fe-4S] cluster as a cofactor.

The protein resides in the cytoplasm. The catalysed reaction is [[Fe-S] cluster scaffold protein carrying a second [4Fe-4S](2+) cluster] + N(6)-octanoyl-L-lysyl-[protein] + 2 oxidized [2Fe-2S]-[ferredoxin] + 2 S-adenosyl-L-methionine + 4 H(+) = [[Fe-S] cluster scaffold protein] + N(6)-[(R)-dihydrolipoyl]-L-lysyl-[protein] + 4 Fe(3+) + 2 hydrogen sulfide + 2 5'-deoxyadenosine + 2 L-methionine + 2 reduced [2Fe-2S]-[ferredoxin]. It functions in the pathway protein modification; protein lipoylation via endogenous pathway; protein N(6)-(lipoyl)lysine from octanoyl-[acyl-carrier-protein]: step 2/2. Functionally, catalyzes the radical-mediated insertion of two sulfur atoms into the C-6 and C-8 positions of the octanoyl moiety bound to the lipoyl domains of lipoate-dependent enzymes, thereby converting the octanoylated domains into lipoylated derivatives. This Kineococcus radiotolerans (strain ATCC BAA-149 / DSM 14245 / SRS30216) protein is Lipoyl synthase.